The primary structure comprises 647 residues: CRE-binding bZIP protein SKO1 (647 aa).

Disordered stretches follow at residues 1-119 (MSSE…GSKR), 135-204 (STTN…QMPG), 305-331 (TPTT…TSTK), and 353-429 (KENE…EEQE). Polar residues predominate over residues 51–85 (RNNSTSTITQHSQRSTHSLNSIPEENGNSTVTDNS). A Phosphoserine modification is found at serine 94. Phosphothreonine is present on threonine 113. Composition is skewed to low complexity over residues 138 to 194 (NPSQ…SGNG) and 305 to 329 (TPTT…PNTS). 2 stretches are compositionally biased toward polar residues: residues 357–368 (NLTTQIENNDQF) and 396–405 (RKNSAVTTAP). Position 399 is a phosphoserine (serine 399). Residues 429–492 (ERKRKEFLER…PSSSSNSQFN (64 aa)) enclose the bZIP domain. A basic motif region spans residues 430-451 (RKRKEFLERNRVAASKFRKRKK). The interval 454–461 (IKKIENDL) is leucine-zipper. At serine 558 the chain carries Phosphoserine.

It belongs to the bZIP family.

The protein resides in the nucleus. Functionally, binds to the CRE motif 5'-TGACGTCA-3' and acts as a repressor of transcription of the SUC2 gene and most probably other genes. The sequence is that of CRE-binding bZIP protein SKO1 (SKO1) from Saccharomyces cerevisiae (strain ATCC 204508 / S288c) (Baker's yeast).